A 263-amino-acid chain; its full sequence is HTH-type transcriptional repressor NanR (263 aa).

A disordered region spans residues 1–25; it reads MDVMNAFDSQAEDSPTSLGRSLRRR. The region spanning 30-98 is the HTH gntR-type domain; it reads KKLSEMVEEE…NGERARVSRP (69 aa). Positions 58-77 form a DNA-binding region, H-T-H motif; that stretch reads ERELMAFFNVGRPSVREALA.

This sequence belongs to the NanR family.

In terms of biological role, transcriptional repressor that controls expression of the genes required for the catabolism of sialic acids. The protein is HTH-type transcriptional repressor NanR of Salmonella schwarzengrund (strain CVM19633).